The following is a 153-amino-acid chain: Large ribosomal subunit protein uL15 (153 aa).

The tract at residues 21-42 is disordered; that stretch reads RGIGSGKGKTGGRGIKGQKSRS. Gly residues predominate over residues 23–35; that stretch reads IGSGKGKTGGRGI.

Belongs to the universal ribosomal protein uL15 family. Part of the 50S ribosomal subunit.

Functionally, binds to the 23S rRNA. The sequence is that of Large ribosomal subunit protein uL15 from Rickettsia peacockii (strain Rustic).